A 1178-amino-acid chain; its full sequence is DNA-directed RNA polymerase subunit beta (1178 aa).

Residues 1-37 (MLEGCILPDFGQSKTDVSPSQSRPQSSPNNSVPGAPN) are disordered. The span at 17 to 33 (VSPSQSRPQSSPNNSVP) shows a compositional bias: low complexity.

This sequence belongs to the RNA polymerase beta chain family. As to quaternary structure, the RNAP catalytic core consists of 2 alpha, 1 beta, 1 beta' and 1 omega subunit. When a sigma factor is associated with the core the holoenzyme is formed, which can initiate transcription.

The catalysed reaction is RNA(n) + a ribonucleoside 5'-triphosphate = RNA(n+1) + diphosphate. DNA-dependent RNA polymerase catalyzes the transcription of DNA into RNA using the four ribonucleoside triphosphates as substrates. In Mycobacterium leprae (strain Br4923), this protein is DNA-directed RNA polymerase subunit beta.